A 379-amino-acid polypeptide reads, in one-letter code: Beta-1,3-N-acetylglucosaminyltransferase lunatic fringe (379 aa).

Residues 1–8 (MLKRCGRR) are Cytoplasmic-facing. Residues 9–29 (LLLALAGALLACLLVLTADPP) form a helical; Signal-anchor for type II membrane protein membrane-spanning segment. The Lumenal segment spans residues 30 to 379 (PPPLPAERGR…TPWCPRTAIF (350 aa)). A disordered region spans residues 86-107 (RDAGPPPGAAPRPADGHPRPLA). Residue Arg129 coordinates substrate. Residue Asn167 is glycosylated (N-linked (GlcNAc...) asparagine). 2 disulfide bridges follow: Cys168–Cys179 and Cys197–Cys260. Substrate is bound at residue Asp201. Position 202 (Asp202) interacts with Mn(2+). Asp290 is an active-site residue. Mn(2+) is bound at residue His314. Residues Cys364 and Cys373 are joined by a disulfide bond.

This sequence belongs to the glycosyltransferase 31 family. Mn(2+) is required as a cofactor. It depends on Co(2+) as a cofactor. Post-translationally, a soluble form may be derived from the membrane form by proteolytic processing.

It is found in the golgi apparatus. The protein localises to the golgi apparatus membrane. It catalyses the reaction 3-O-(alpha-L-fucosyl)-L-threonyl-[EGF-like domain protein] + UDP-N-acetyl-alpha-D-glucosamine = 3-O-(N-acetyl-beta-D-glucosaminyl-(1-&gt;3)-alpha-L-fucosyl)-L-threonyl-[EGF-like domain protein] + UDP + H(+). It carries out the reaction 3-O-(alpha-L-fucosyl)-L-seryl-[EGF-like domain protein] + UDP-N-acetyl-alpha-D-glucosamine = 3-O-(N-acetyl-beta-D-glucosaminyl-(1-&gt;3)-alpha-L-fucosyl)-L-seryl-[EGF-like domain protein] + UDP + H(+). Glycosyltransferase that initiates the elongation of O-linked fucose residues attached to EGF-like repeats in the extracellular domain of Notch molecules. Modulates NOTCH1 activity by modifying O-fucose residues at specific EGF-like domains resulting in inhibition of NOTCH1 activation by JAG1 and enhancement of NOTCH1 activation by DLL1 via an increase in its binding to DLL1. Decreases the binding of JAG1 to NOTCH2 but not that of DLL1. Essential mediator of somite segmentation and patterning. In Homo sapiens (Human), this protein is Beta-1,3-N-acetylglucosaminyltransferase lunatic fringe.